A 185-amino-acid polypeptide reads, in one-letter code: UPF0301 protein MS0260 (185 aa).

It belongs to the UPF0301 (AlgH) family.

The protein is UPF0301 protein MS0260 of Mannheimia succiniciproducens (strain KCTC 0769BP / MBEL55E).